A 544-amino-acid chain; its full sequence is CTP synthase (544 aa).

The segment at 1-266 is amidoligase domain; that stretch reads MTRFVFITGG…DREVLRHFNL (266 aa). Serine 13 is a CTP binding site. Residue serine 13 participates in UTP binding. ATP is bound at residue 14 to 19; that stretch reads SLGKGI. Tyrosine 54 is a binding site for L-glutamine. Residue aspartate 71 participates in ATP binding. Mg(2+) contacts are provided by aspartate 71 and glutamate 140. CTP is bound by residues 147 to 149, 187 to 192, and lysine 223; these read DIE and KTKPTQ. UTP is bound by residues 187-192 and lysine 223; that span reads KTKPTQ. A Glutamine amidotransferase type-1 domain is found at 292-543; the sequence is KIAIVGKYIT…VAAAVRQARL (252 aa). Position 354 (glycine 354) interacts with L-glutamine. The active-site Nucleophile; for glutamine hydrolysis is the cysteine 381. Residues 382-385, glutamate 405, and arginine 471 each bind L-glutamine; that span reads FGMQ. Residues histidine 516 and glutamate 518 contribute to the active site.

Belongs to the CTP synthase family. As to quaternary structure, homotetramer.

The catalysed reaction is UTP + L-glutamine + ATP + H2O = CTP + L-glutamate + ADP + phosphate + 2 H(+). It carries out the reaction L-glutamine + H2O = L-glutamate + NH4(+). It catalyses the reaction UTP + NH4(+) + ATP = CTP + ADP + phosphate + 2 H(+). It participates in pyrimidine metabolism; CTP biosynthesis via de novo pathway; CTP from UDP: step 2/2. Allosterically activated by GTP, when glutamine is the substrate; GTP has no effect on the reaction when ammonia is the substrate. The allosteric effector GTP functions by stabilizing the protein conformation that binds the tetrahedral intermediate(s) formed during glutamine hydrolysis. Inhibited by the product CTP, via allosteric rather than competitive inhibition. Catalyzes the ATP-dependent amination of UTP to CTP with either L-glutamine or ammonia as the source of nitrogen. Regulates intracellular CTP levels through interactions with the four ribonucleotide triphosphates. The sequence is that of CTP synthase from Granulibacter bethesdensis (strain ATCC BAA-1260 / CGDNIH1).